A 229-amino-acid polypeptide reads, in one-letter code: Uracil-DNA glycosylase (229 aa).

Asp64 functions as the Proton acceptor in the catalytic mechanism.

The protein belongs to the uracil-DNA glycosylase (UDG) superfamily. UNG family.

Its subcellular location is the cytoplasm. The catalysed reaction is Hydrolyzes single-stranded DNA or mismatched double-stranded DNA and polynucleotides, releasing free uracil.. Excises uracil residues from the DNA which can arise as a result of misincorporation of dUMP residues by DNA polymerase or due to deamination of cytosine. The protein is Uracil-DNA glycosylase of Escherichia coli (strain 55989 / EAEC).